The sequence spans 430 residues: MENPFEITNVIAREILDSRGNPTVEVEVYTPISMGRAAVPSGASTGTHEALELRDGGSRYHGKGVRRAVENVNKIIAPEIIGMDVTWQRDIDTLMLELDGTENKSNLGANAILGVSLAVAKAAANALGLPLYQYIGGTNAYVMPVPMSNVINGGVHAGNELDFQEFMIMPVGADSFREAIRWVSETYHVLKKVIMEKYGRNAVNVGDEGGFAPPMKEVTEPLDVLIKAIEEAGYKPGDEIAFALDAASSEFFDGEKGKYVVAGKEYDKGELLELYRELVTTYPIVSIEDPFHEEDWEGFVMITKELGSKVQIVGDDLFVTNPKRIRKGIEMGAANALLLKVNQIGTLSEAIDAAYTSFRAGYGVVVSHRSGETEDATIADLAVALNAGQIKTGAPARSDRNAKYNQLIRIEEELEGIAVYPGKKFRNPFL.

A (2R)-2-phosphoglycerate-binding site is contributed by glutamine 164. The active-site Proton donor is glutamate 208. Mg(2+)-binding residues include aspartate 245, glutamate 288, and aspartate 315. 4 residues coordinate (2R)-2-phosphoglycerate: lysine 340, arginine 369, serine 370, and lysine 391. Residue lysine 340 is the Proton acceptor of the active site.

This sequence belongs to the enolase family. Requires Mg(2+) as cofactor.

The protein resides in the cytoplasm. The protein localises to the secreted. It is found in the cell surface. It carries out the reaction (2R)-2-phosphoglycerate = phosphoenolpyruvate + H2O. Its pathway is carbohydrate degradation; glycolysis; pyruvate from D-glyceraldehyde 3-phosphate: step 4/5. Functionally, catalyzes the reversible conversion of 2-phosphoglycerate (2-PG) into phosphoenolpyruvate (PEP). It is essential for the degradation of carbohydrates via glycolysis. The protein is Enolase of Thermococcus kodakarensis (strain ATCC BAA-918 / JCM 12380 / KOD1) (Pyrococcus kodakaraensis (strain KOD1)).